Here is a 277-residue protein sequence, read N- to C-terminus: 4-hydroxybenzoate octaprenyltransferase (277 aa).

A run of 8 helical transmembrane segments spans residues 24–44 (FAAA…LGVI), 81–101 (VEAK…DLSL), 102–122 (NQYA…YPFM), 129–149 (PQVV…GAVI), 152–172 (LPLT…AYDT), 201–221 (IIAL…WLSE), 224–244 (IGYF…CWLT), and 255–275 (AFLN…VGIY).

It belongs to the UbiA prenyltransferase family. Mg(2+) serves as cofactor.

Its subcellular location is the cell inner membrane. The enzyme catalyses all-trans-octaprenyl diphosphate + 4-hydroxybenzoate = 4-hydroxy-3-(all-trans-octaprenyl)benzoate + diphosphate. It participates in cofactor biosynthesis; ubiquinone biosynthesis. Its function is as follows. Catalyzes the prenylation of para-hydroxybenzoate (PHB) with an all-trans polyprenyl group. Mediates the second step in the final reaction sequence of ubiquinone-8 (UQ-8) biosynthesis, which is the condensation of the polyisoprenoid side chain with PHB, generating the first membrane-bound Q intermediate 3-octaprenyl-4-hydroxybenzoate. This is 4-hydroxybenzoate octaprenyltransferase from Haemophilus ducreyi (strain 35000HP / ATCC 700724).